Here is a 69-residue protein sequence, read N- to C-terminus: Protein transport protein Sec61 subunit gamma-1 (69 aa).

Residue M1 is modified to N-acetylmethionine. Residues M1–E32 are Cytoplasmic-facing. A helical transmembrane segment spans residues F33–I61. Over N62–T69 the chain is Extracellular.

Belongs to the SecE/SEC61-gamma family. In terms of assembly, heterotrimeric complex composed of SEC61-alpha, SEC61-beta and SEC61-gamma.

The protein localises to the endoplasmic reticulum membrane. Its function is as follows. Necessary for protein translocation in the endoplasmic reticulum. This Arabidopsis thaliana (Mouse-ear cress) protein is Protein transport protein Sec61 subunit gamma-1 (SEC61G1).